A 444-amino-acid polypeptide reads, in one-letter code: Phosphoglucosamine mutase (444 aa).

The active-site Phosphoserine intermediate is the Ser-99. Mg(2+) contacts are provided by Ser-99, Asp-242, Asp-244, and Asp-246. Ser-99 bears the Phosphoserine mark.

The protein belongs to the phosphohexose mutase family. Requires Mg(2+) as cofactor. Activated by phosphorylation.

The catalysed reaction is alpha-D-glucosamine 1-phosphate = D-glucosamine 6-phosphate. Its function is as follows. Catalyzes the conversion of glucosamine-6-phosphate to glucosamine-1-phosphate. In Aliarcobacter butzleri (strain RM4018) (Arcobacter butzleri), this protein is Phosphoglucosamine mutase.